Reading from the N-terminus, the 78-residue chain is MKSATLLALSFLLIALYFLICEAEHSRYEEHEILEENMGDVVNLEQRSCAKPGEMCMRIKCCDGQCGCNRGTGRCFCK.

An N-terminal signal peptide occupies residues methionine 1–alanine 23. The propeptide occupies glutamate 24–arginine 47. Intrachain disulfides connect cysteine 49–cysteine 62, cysteine 56–cysteine 66, and cysteine 61–cysteine 77.

This sequence belongs to the hainantoxin family. 20 subfamily. In terms of tissue distribution, expressed by the venom gland.

It localises to the secreted. Putative ion channel inhibitor. This is Hainantoxin-XX from Cyriopagopus hainanus (Chinese bird spider).